Reading from the N-terminus, the 185-residue chain is ATP-dependent protease subunit HslV (185 aa).

Residue T12 is part of the active site. Residues S168, C171, and T174 each contribute to the Na(+) site.

Belongs to the peptidase T1B family. HslV subfamily. As to quaternary structure, a double ring-shaped homohexamer of HslV is capped on each side by a ring-shaped HslU homohexamer. The assembly of the HslU/HslV complex is dependent on binding of ATP.

The protein resides in the cytoplasm. The enzyme catalyses ATP-dependent cleavage of peptide bonds with broad specificity.. Its activity is regulated as follows. Allosterically activated by HslU binding. In terms of biological role, protease subunit of a proteasome-like degradation complex believed to be a general protein degrading machinery. This is ATP-dependent protease subunit HslV from Jannaschia sp. (strain CCS1).